A 1527-amino-acid polypeptide reads, in one-letter code: Lysophospholipase nte1 (1527 aa).

At 1-69 (MADDGGPFPL…PPPAPSTMVG (69 aa)) the chain is on the cytoplasmic side. Residues 70–90 (WIGWVFSFVFQVIPSILYWAI) form a helical membrane-spanning segment. Residues 91–112 (TFCTITLPTWLFTLFSMSLTFT) lie on the Lumenal side of the membrane. Residues 113–133 (MNFTTLLLIALAIVSTVSWFI) traverse the membrane as a helical segment. The Cytoplasmic portion of the chain corresponds to 134-1527 (RYRFLNMYSR…RTLAPRRASI (1394 aa)). 4 disordered regions span residues 240 to 259 (ADHE…GQNV), 299 to 387 (LSSS…HPDI), 576 to 596 (EKEQ…PFHR), and 750 to 785 (AHGE…RRQS). Basic and acidic residues predominate over residues 355–373 (HLEESRGTPDHDHQPESRT). A nucleoside 3',5'-cyclic phosphate is bound by residues 685 to 804 (GGTS…VGSV) and 846 to 966 (RLTS…IAQR). The span at 761 to 771 (RTTTASSRTSS) shows a compositional bias: low complexity. One can recognise a PNPLA domain in the interval 1224–1388 (LVLGGGGARG…IDNLTVPHMK (165 aa)). Residues 1228–1233 (GGGARG) carry the GXGXXG motif. The GXSXG signature appears at 1255–1259 (GTSIG). Serine 1257 acts as the Nucleophile in catalysis. Aspartate 1375 functions as the Proton acceptor in the catalytic mechanism. Positions 1375–1377 (DGG) match the DGA/G motif.

It belongs to the NTE family.

It localises to the endoplasmic reticulum membrane. The catalysed reaction is a 1-acyl-sn-glycero-3-phosphocholine + H2O = sn-glycerol 3-phosphocholine + a fatty acid + H(+). Inhibited by organophosphorus esters. In terms of biological role, intracellular phospholipase B that catalyzes the double deacylation of phosphatidylcholine (PC) to glycerophosphocholine (GroPCho). Plays an important role in membrane lipid homeostasis. Responsible for the rapid PC turnover in response to inositol, elevated temperatures, or when choline is present in the growth medium. The sequence is that of Lysophospholipase nte1 (nte1) from Aspergillus terreus (strain NIH 2624 / FGSC A1156).